Reading from the N-terminus, the 266-residue chain is N-acetylneuraminate lyase B (266 aa).

Positions 51 and 52 each coordinate aceneuramate. Residue Tyr-143 is the Proton donor of the active site. The active-site Schiff-base intermediate with substrate is Lys-173. Residues Ser-175, Gly-197, Asp-199, Glu-200, and Ser-216 each contribute to the aceneuramate site.

This sequence belongs to the DapA family. NanA subfamily. In terms of assembly, homotetramer.

Its subcellular location is the cytoplasm. The enzyme catalyses aceneuramate = aldehydo-N-acetyl-D-mannosamine + pyruvate. It participates in amino-sugar metabolism; N-acetylneuraminate degradation. Its function is as follows. Catalyzes the cleavage of N-acetylneuraminic acid (sialic acid) to form pyruvate and N-acetylmannosamine via a Schiff base intermediate. It prevents sialic acids from being recycled and returning to the cell surface. Involved in the N-glycolylneuraminic acid (Neu5Gc) degradation pathway. This Xenopus laevis (African clawed frog) protein is N-acetylneuraminate lyase B (npl-b).